The sequence spans 370 residues: MQLVAALAALGALVAPAVAYPHAPMNETLVDVQLTAVGNTMVKATITNKGDSVLNMLKFNTIMDENPTRKVMVFQDGAEVPFTGMMPRYLMSDLTEEFFTTLAPQASVEHSFDIATTHDLSAGGKYVISASGAIPTAEEYSTTITSTALYESNELHMEIDGTQAAAVEQAMKFTPEMQSIHSRALQKRTKIVGGSCNQNTLRATQNALGNSARLAQAASRAASQNAAKFQEYFRTNDANAKQRVIARLNSVARESSSANGGSTTYYCSDTVGGCKPRVLAYTLPSRNLVVNCPIYYNLPPLTKQCHAQDQATTTLHEFTHNPAVASPHCQDYAYGYQQCISLPAAKAVQNADNYALFANGMFYSLFTIIF.

The N-terminal stretch at 1–19 is a signal peptide; that stretch reads MQLVAALAALGALVAPAVA. A propeptide spanning residues 20–188 is cleaved from the precursor; that stretch reads YPHAPMNETL…SIHSRALQKR (169 aa). Cystine bridges form between C196–C267 and C274–C292. H316 serves as a coordination point for Zn(2+). Residue E317 is part of the active site. Zn(2+) contacts are provided by H320 and D331.

This sequence belongs to the peptidase M35 family. The cofactor is Zn(2+).

The protein resides in the secreted. The enzyme catalyses Preferential cleavage of bonds with hydrophobic residues in P1'. Also 3-Asn-|-Gln-4 and 8-Gly-|-Ser-9 bonds in insulin B chain.. Functionally, probable secreted metalloprotease that shows high activities on basic nuclear substrates such as histone and protamine. May be involved in virulence. This is Probable neutral protease 2 homolog TRV_02539 from Trichophyton verrucosum (strain HKI 0517).